We begin with the raw amino-acid sequence, 632 residues long: Armadillo repeat-containing X-linked protein 2 (632 aa).

Residues 1 to 6 (MSRVRD) lie on the Mitochondrial intermembrane side of the membrane. The segment at 1-6 (MSRVRD) is mitochondrion outer membrane (MOM)-targeting sequence. The chain crosses the membrane as a helical; Signal-anchor span at residues 7 to 25 (AGCVAAGIVIGAGAWYCVY). Residues 26–40 (KYTRGRDQTKKRMAK) form a mitochondrion outer membrane (MOM)-targeting sequence region. Residues 26-632 (KYTRGRDQTK…VKVIKLVNKF (607 aa)) lie on the Cytoplasmic side of the membrane. 3 disordered regions span residues 68–124 (GFSP…AGVG), 160–304 (APKV…KVEV), and 335–369 (VPDS…RPVA). Composition is skewed to low complexity over residues 86–120 (EASA…EADG) and 211–241 (VASP…SPGT). The segment covering 336–356 (PDSEEGESGWTDTESDSDSEP) has biased composition (acidic residues). 3 ARM repeats span residues 376-416 (PYEI…NNAN), 418-457 (SCNQ…NLSE), and 498-537 (ITND…NFAE).

The protein belongs to the eutherian X-chromosome-specific Armcx family. In terms of tissue distribution, expressed at high levels ovary, heart, testis, prostate, brain, spleen and colon. Expressed at very low levels in liver and thymus. Not expressed in peripheral blood leukocytes. Not expressed in pancreas and ovarian carcinomas.

Its subcellular location is the mitochondrion. It is found in the mitochondrion outer membrane. In terms of biological role, may regulate the dynamics and distribution of mitochondria in neural cells. The protein is Armadillo repeat-containing X-linked protein 2 (ARMCX2) of Homo sapiens (Human).